The sequence spans 89 residues: Large ribosomal subunit protein bL27 (89 aa).

The tract at residues 1 to 21 is disordered; sequence MAHKKAGGSSRNGRDSAGRRL.

This sequence belongs to the bacterial ribosomal protein bL27 family.

In Roseobacter denitrificans (strain ATCC 33942 / OCh 114) (Erythrobacter sp. (strain OCh 114)), this protein is Large ribosomal subunit protein bL27.